A 219-amino-acid chain; its full sequence is tRNA (guanine-N(7)-)-methyltransferase (219 aa).

Residues Asp47, Glu72, Asn99, and Asp125 each contribute to the S-adenosyl-L-methionine site. The active site involves Asp125. Positions 129 and 161 each coordinate substrate.

It belongs to the class I-like SAM-binding methyltransferase superfamily. TrmB family.

It carries out the reaction guanosine(46) in tRNA + S-adenosyl-L-methionine = N(7)-methylguanosine(46) in tRNA + S-adenosyl-L-homocysteine. Its pathway is tRNA modification; N(7)-methylguanine-tRNA biosynthesis. Its function is as follows. Catalyzes the formation of N(7)-methylguanine at position 46 (m7G46) in tRNA. In Nostoc sp. (strain PCC 7120 / SAG 25.82 / UTEX 2576), this protein is tRNA (guanine-N(7)-)-methyltransferase.